We begin with the raw amino-acid sequence, 858 residues long: Bifunctional uridylyltransferase/uridylyl-removing enzyme (858 aa).

A uridylyltransferase region spans residues 1-324 (MSASVAEPPP…PATSGVTRVL (324 aa)). The segment at 325–681 (SPGRFVEKQG…ARPSPVGDAL (357 aa)) is uridylyl-removing. An HD domain is found at 443 to 565 (VDQHILMVLR…VGSERRLTAL (123 aa)). ACT domains are found at residues 682–761 (QVLV…PEPS) and 790–858 (ILSV…AIAV).

It belongs to the GlnD family. Requires Mg(2+) as cofactor.

The catalysed reaction is [protein-PII]-L-tyrosine + UTP = [protein-PII]-uridylyl-L-tyrosine + diphosphate. It catalyses the reaction [protein-PII]-uridylyl-L-tyrosine + H2O = [protein-PII]-L-tyrosine + UMP + H(+). With respect to regulation, uridylyltransferase (UTase) activity is inhibited by glutamine, while glutamine activates uridylyl-removing (UR) activity. Functionally, modifies, by uridylylation and deuridylylation, the PII regulatory proteins (GlnB and homologs), in response to the nitrogen status of the cell that GlnD senses through the glutamine level. Under low glutamine levels, catalyzes the conversion of the PII proteins and UTP to PII-UMP and PPi, while under higher glutamine levels, GlnD hydrolyzes PII-UMP to PII and UMP (deuridylylation). Thus, controls uridylylation state and activity of the PII proteins, and plays an important role in the regulation of nitrogen assimilation and metabolism. The protein is Bifunctional uridylyltransferase/uridylyl-removing enzyme of Burkholderia mallei (strain NCTC 10247).